The following is a 396-amino-acid chain: Microcin B17-processing protein McbD (396 aa).

A YcaO domain is found at 41 to 396 (ASAAGETLKS…VRESKMVPFP (356 aa)).

The protein resides in the cytoplasm. Functionally, necessary to process the inactive microcin B17 (McbA) precursor into the active peptide. The chain is Microcin B17-processing protein McbD (mcbD) from Escherichia coli.